The chain runs to 423 residues: Serine--tRNA ligase (423 aa).

Residue 229–231 (TAE) coordinates L-serine. 260–262 (RRE) lines the ATP pocket. Glutamate 283 lines the L-serine pocket. 347–350 (EISS) provides a ligand contact to ATP. Serine 383 contributes to the L-serine binding site.

Belongs to the class-II aminoacyl-tRNA synthetase family. Type-1 seryl-tRNA synthetase subfamily. As to quaternary structure, homodimer. The tRNA molecule binds across the dimer.

The protein localises to the cytoplasm. It carries out the reaction tRNA(Ser) + L-serine + ATP = L-seryl-tRNA(Ser) + AMP + diphosphate + H(+). The enzyme catalyses tRNA(Sec) + L-serine + ATP = L-seryl-tRNA(Sec) + AMP + diphosphate + H(+). It participates in aminoacyl-tRNA biosynthesis; selenocysteinyl-tRNA(Sec) biosynthesis; L-seryl-tRNA(Sec) from L-serine and tRNA(Sec): step 1/1. Its function is as follows. Catalyzes the attachment of serine to tRNA(Ser). Is also able to aminoacylate tRNA(Sec) with serine, to form the misacylated tRNA L-seryl-tRNA(Sec), which will be further converted into selenocysteinyl-tRNA(Sec). This is Serine--tRNA ligase from Trichlorobacter lovleyi (strain ATCC BAA-1151 / DSM 17278 / SZ) (Geobacter lovleyi).